The primary structure comprises 708 residues: tRNA 5-methylaminomethyl-2-thiouridine biosynthesis bifunctional protein MnmC (708 aa).

The interval 1-278 (MTAEPNKPCQ…ERQVLRQQDA (278 aa)) is tRNA (mnm(5)s(2)U34)-methyltransferase. The segment at 301 to 708 (IGGGLASAHL…LRKLLKGKAL (408 aa)) is FAD-dependent cmnm(5)s(2)U34 oxidoreductase.

In the N-terminal section; belongs to the methyltransferase superfamily. tRNA (mnm(5)s(2)U34)-methyltransferase family. It in the C-terminal section; belongs to the DAO family. The cofactor is FAD.

The protein resides in the cytoplasm. The catalysed reaction is 5-aminomethyl-2-thiouridine(34) in tRNA + S-adenosyl-L-methionine = 5-methylaminomethyl-2-thiouridine(34) in tRNA + S-adenosyl-L-homocysteine + H(+). In terms of biological role, catalyzes the last two steps in the biosynthesis of 5-methylaminomethyl-2-thiouridine (mnm(5)s(2)U) at the wobble position (U34) in tRNA. Catalyzes the FAD-dependent demodification of cmnm(5)s(2)U34 to nm(5)s(2)U34, followed by the transfer of a methyl group from S-adenosyl-L-methionine to nm(5)s(2)U34, to form mnm(5)s(2)U34. This is tRNA 5-methylaminomethyl-2-thiouridine biosynthesis bifunctional protein MnmC from Shewanella baltica (strain OS195).